A 30-amino-acid chain; its full sequence is KQATCSIPYEYSNGKFKRTLYYSNGVYANS.

As to expression, expressed by the venom gland.

It localises to the secreted. The protein is Hainantoxin F7-28.42 of Cyriopagopus hainanus (Chinese bird spider).